The sequence spans 158 residues: SsrA-binding protein (158 aa).

The disordered stretch occupies residues 133-158; sequence QLHDKRETEKKRDWNKEKGRLLRDKH.

This sequence belongs to the SmpB family.

The protein localises to the cytoplasm. In terms of biological role, required for rescue of stalled ribosomes mediated by trans-translation. Binds to transfer-messenger RNA (tmRNA), required for stable association of tmRNA with ribosomes. tmRNA and SmpB together mimic tRNA shape, replacing the anticodon stem-loop with SmpB. tmRNA is encoded by the ssrA gene; the 2 termini fold to resemble tRNA(Ala) and it encodes a 'tag peptide', a short internal open reading frame. During trans-translation Ala-aminoacylated tmRNA acts like a tRNA, entering the A-site of stalled ribosomes, displacing the stalled mRNA. The ribosome then switches to translate the ORF on the tmRNA; the nascent peptide is terminated with the 'tag peptide' encoded by the tmRNA and targeted for degradation. The ribosome is freed to recommence translation, which seems to be the essential function of trans-translation. The chain is SsrA-binding protein from Beijerinckia indica subsp. indica (strain ATCC 9039 / DSM 1715 / NCIMB 8712).